We begin with the raw amino-acid sequence, 414 residues long: Isocitrate dehydrogenase [NADP] cytoplasmic (414 aa).

Serine 2 carries the N-acetylserine modification. Position 42 is a phosphotyrosine (tyrosine 42). 75 to 77 provides a ligand contact to NADP(+); it reads TIT. Threonine 77 contributes to the substrate binding site. Lysine 81 bears the N6-acetyllysine mark. Arginine 82 contributes to the NADP(+) binding site. Substrate contacts are provided by residues 94–100 and arginine 109; that span reads SPNGTIR. Residue lysine 126 is modified to N6-succinyllysine. Substrate-binding residues include arginine 132 and lysine 212. Residues lysine 224, lysine 233, and lysine 243 each carry the N6-acetyllysine modification. Aspartate 252 provides a ligand contact to Mn(2+). Position 260 (lysine 260) interacts with NADP(+). Mn(2+)-binding residues include aspartate 275 and aspartate 279. 310–315 contacts NADP(+); that stretch reads GTVTRH. An N6-acetyllysine modification is found at lysine 321. Asparagine 328 lines the NADP(+) pocket. Phosphoserine is present on serine 389. Lysine 400 carries the N6-succinyllysine modification.

Belongs to the isocitrate and isopropylmalate dehydrogenases family. Homodimer. Mg(2+) is required as a cofactor. It depends on Mn(2+) as a cofactor. Post-translationally, acetylation at Lys-374 dramatically reduces catalytic activity.

The protein resides in the cytoplasm. Its subcellular location is the cytosol. The catalysed reaction is D-threo-isocitrate + NADP(+) = 2-oxoglutarate + CO2 + NADPH. In terms of biological role, catalyzes the NADP(+)-dependent oxidative decarboxylation of isocitrate (D-threo-isocitrate) to 2-ketoglutarate (2-oxoglutarate), which is required by other enzymes such as the phytanoyl-CoA dioxygenase. Plays a critical role in the generation of NADPH, an important cofactor in many biosynthesis pathways. May act as a corneal epithelial crystallin and may be involved in maintaining corneal epithelial transparency. This Pongo abelii (Sumatran orangutan) protein is Isocitrate dehydrogenase [NADP] cytoplasmic (IDH1).